A 484-amino-acid chain; its full sequence is Putative cysteine ligase BshC (484 aa).

Positions 372-435 form a coiled coil; it reads RAFRDRVEGL…AARDEVLARH (64 aa).

It belongs to the BshC family.

The chain is Putative cysteine ligase BshC from Thermus thermophilus (strain ATCC BAA-163 / DSM 7039 / HB27).